A 642-amino-acid chain; its full sequence is Threonine--tRNA ligase (642 aa).

One can recognise a TGS domain in the interval 1 to 61; sequence MPVVTLPDGS…DSDANLAIIT (61 aa). The segment at 243-534 is catalytic; the sequence is DHRKIGKQLD…LTEEYAGFFP (292 aa). Cysteine 334, histidine 385, and histidine 511 together coordinate Zn(2+).

Belongs to the class-II aminoacyl-tRNA synthetase family. In terms of assembly, homodimer. Zn(2+) serves as cofactor.

Its subcellular location is the cytoplasm. The catalysed reaction is tRNA(Thr) + L-threonine + ATP = L-threonyl-tRNA(Thr) + AMP + diphosphate + H(+). In terms of biological role, catalyzes the attachment of threonine to tRNA(Thr) in a two-step reaction: L-threonine is first activated by ATP to form Thr-AMP and then transferred to the acceptor end of tRNA(Thr). Also edits incorrectly charged L-seryl-tRNA(Thr). This Photorhabdus laumondii subsp. laumondii (strain DSM 15139 / CIP 105565 / TT01) (Photorhabdus luminescens subsp. laumondii) protein is Threonine--tRNA ligase.